A 271-amino-acid polypeptide reads, in one-letter code: NAD kinase (271 aa).

The active-site Proton acceptor is the Asp64. Residues 64-65 (DG), Arg69, 132-133 (NE), Lys143, Arg160, Asp162, 173-178 (TAYAMS), Ala197, and Gln231 contribute to the NAD(+) site.

This sequence belongs to the NAD kinase family. Requires a divalent metal cation as cofactor.

It is found in the cytoplasm. It catalyses the reaction NAD(+) + ATP = ADP + NADP(+) + H(+). Involved in the regulation of the intracellular balance of NAD and NADP, and is a key enzyme in the biosynthesis of NADP. Catalyzes specifically the phosphorylation on 2'-hydroxyl of the adenosine moiety of NAD to yield NADP. This chain is NAD kinase, found in Methanocorpusculum labreanum (strain ATCC 43576 / DSM 4855 / Z).